The chain runs to 65 residues: Large ribosomal subunit protein uL29 (65 aa).

Belongs to the universal ribosomal protein uL29 family.

This Brevibacillus brevis (strain 47 / JCM 6285 / NBRC 100599) protein is Large ribosomal subunit protein uL29.